The following is a 78-amino-acid chain: Short neurotoxin OH-5 (78 aa).

An N-terminal signal peptide occupies residues 1–21 (MKNLLLTFLVVTIVCLDLGYT). 4 disulfides stabilise this stretch: C24/C40, C33/C58, C62/C70, and C71/C76.

This sequence belongs to the three-finger toxin family. Short-chain subfamily. As to expression, expressed by the venom gland.

Its subcellular location is the secreted. This three-finger toxin binds and inhibits the nicotinic acetylcholine receptor (nAChR). The sequence is that of Short neurotoxin OH-5 from Ophiophagus hannah (King cobra).